The chain runs to 282 residues: Pantothenate synthetase (282 aa).

26–33 (MGNLHEGH) contributes to the ATP binding site. The active-site Proton donor is His33. Gln57 is a binding site for (R)-pantoate. Gln57 contributes to the beta-alanine binding site. 144-147 (GKKD) is a binding site for ATP. (R)-pantoate is bound at residue Gln150. ATP contacts are provided by residues Ile173 and 181 to 184 (LSSR).

The protein belongs to the pantothenate synthetase family. As to quaternary structure, homodimer.

It localises to the cytoplasm. The catalysed reaction is (R)-pantoate + beta-alanine + ATP = (R)-pantothenate + AMP + diphosphate + H(+). It participates in cofactor biosynthesis; (R)-pantothenate biosynthesis; (R)-pantothenate from (R)-pantoate and beta-alanine: step 1/1. Functionally, catalyzes the condensation of pantoate with beta-alanine in an ATP-dependent reaction via a pantoyl-adenylate intermediate. The protein is Pantothenate synthetase of Cupriavidus necator (strain ATCC 17699 / DSM 428 / KCTC 22496 / NCIMB 10442 / H16 / Stanier 337) (Ralstonia eutropha).